The following is a 394-amino-acid chain: Protein TsgA homolog (394 aa).

The next 12 helical transmembrane spans lie at 11 to 31 (WISY…GMVM), 51 to 71 (FLNA…EIIP), 76 to 96 (LMFG…GKSL), 101 to 121 (LCMF…TFLI), 134 to 154 (LLFT…VAAM), 162 to 182 (WYWV…LTLF), 206 to 226 (IGVL…LGFI), 251 to 271 (FWTS…FFDL), 274 to 294 (IVTI…STDN), 302 to 322 (IMAL…LGSL), 334 to 354 (FILT…GPIV), and 363 to 383 (LTTA…LGFV).

This sequence belongs to the major facilitator superfamily. TsgA family.

The protein localises to the cell inner membrane. The protein is Protein TsgA homolog of Serratia proteamaculans (strain 568).